A 314-amino-acid polypeptide reads, in one-letter code: Aspartate carbamoyltransferase catalytic subunit (314 aa).

The carbamoyl phosphate site is built by arginine 55 and threonine 56. Lysine 83 lines the L-aspartate pocket. Residues arginine 105, histidine 139, and glutamine 142 each contribute to the carbamoyl phosphate site. Arginine 172 and arginine 226 together coordinate L-aspartate. Positions 267 and 268 each coordinate carbamoyl phosphate.

The protein belongs to the aspartate/ornithine carbamoyltransferase superfamily. ATCase family. As to quaternary structure, heterododecamer (2C3:3R2) of six catalytic PyrB chains organized as two trimers (C3), and six regulatory PyrI chains organized as three dimers (R2).

The enzyme catalyses carbamoyl phosphate + L-aspartate = N-carbamoyl-L-aspartate + phosphate + H(+). It functions in the pathway pyrimidine metabolism; UMP biosynthesis via de novo pathway; (S)-dihydroorotate from bicarbonate: step 2/3. Its function is as follows. Catalyzes the condensation of carbamoyl phosphate and aspartate to form carbamoyl aspartate and inorganic phosphate, the committed step in the de novo pyrimidine nucleotide biosynthesis pathway. This is Aspartate carbamoyltransferase catalytic subunit from Rhodococcus opacus (strain B4).